Reading from the N-terminus, the 481-residue chain is Rhamnogalacturonan I rhamnosyltransferase 4 (481 aa).

A helical; Signal-anchor for type II membrane protein membrane pass occupies residues 33 to 55 (VWFFRVCSCILVWTCLIQLFWHS). Asparagine 85 and asparagine 118 each carry an N-linked (GlcNAc...) asparagine glycan. Position 258-260 (258-260 (HLR)) interacts with substrate. Residues asparagine 372 and asparagine 432 are each glycosylated (N-linked (GlcNAc...) asparagine).

The protein belongs to the glycosyltransferase GT106 family.

It localises to the golgi apparatus membrane. The catalysed reaction is alpha-D-galacturonosyl-[(1-&gt;2)-alpha-L-rhamnosyl-(1-&gt;4)-alpha-D-galacturonosyl](n) + UDP-beta-L-rhamnose = [(1-&gt;2)-alpha-L-rhamnosyl-(1-&gt;4)-alpha-D-galacturonosyl](n+1) + UDP + H(+). Its pathway is glycan metabolism; pectin biosynthesis. Glycosyltransferase involved in the formation of rhamnogalacturonan I (RG-I) oligosaccharides in the seed coat mucilage, which is a specialized cell wall with abundant RG-I. Transfers the rhamnose residue from UDP-beta-L-rhamnose to RG-I oligosaccharides. This chain is Rhamnogalacturonan I rhamnosyltransferase 4, found in Arabidopsis thaliana (Mouse-ear cress).